We begin with the raw amino-acid sequence, 120 residues long: Putative membrane protein insertion efficiency factor (120 aa).

The interval 93–120 (GRSCQTDVDGANDDWNPASKRGERESFV) is disordered.

Belongs to the UPF0161 family.

The protein localises to the cell membrane. In terms of biological role, could be involved in insertion of integral membrane proteins into the membrane. The sequence is that of Putative membrane protein insertion efficiency factor from Mycobacterium bovis (strain ATCC BAA-935 / AF2122/97).